The sequence spans 261 residues: 14-3-3-like protein GF14-12 (261 aa).

The protein belongs to the 14-3-3 family.

Is associated with a DNA binding complex to bind to the G box, a well-characterized cis-acting DNA regulatory element found in plant genes. The chain is 14-3-3-like protein GF14-12 (GRF2) from Zea mays (Maize).